The primary structure comprises 88 residues: Small ribosomal subunit protein uS17 (88 aa).

This sequence belongs to the universal ribosomal protein uS17 family. Part of the 30S ribosomal subunit.

In terms of biological role, one of the primary rRNA binding proteins, it binds specifically to the 5'-end of 16S ribosomal RNA. In Prochlorococcus marinus (strain MIT 9312), this protein is Small ribosomal subunit protein uS17.